Here is a 406-residue protein sequence, read N- to C-terminus: S-adenosylmethionine synthase (406 aa).

ATP is bound at residue His16. Asp18 serves as a coordination point for Mg(2+). Glu44 contributes to the K(+) binding site. Residues Glu57 and Gln100 each contribute to the L-methionine site. Residues 100-110 (QSVDIAQGVDR) form a flexible loop region. ATP-binding positions include 165 to 167 (DAK), Asp241, 247 to 248 (RK), Ala264, and Lys268. Asp241 contacts L-methionine. Lys272 lines the L-methionine pocket.

This sequence belongs to the AdoMet synthase family. Homotetramer; dimer of dimers. Mg(2+) serves as cofactor. The cofactor is K(+).

The protein resides in the cytoplasm. The enzyme catalyses L-methionine + ATP + H2O = S-adenosyl-L-methionine + phosphate + diphosphate. The protein operates within amino-acid biosynthesis; S-adenosyl-L-methionine biosynthesis; S-adenosyl-L-methionine from L-methionine: step 1/1. In terms of biological role, catalyzes the formation of S-adenosylmethionine (AdoMet) from methionine and ATP. The overall synthetic reaction is composed of two sequential steps, AdoMet formation and the subsequent tripolyphosphate hydrolysis which occurs prior to release of AdoMet from the enzyme. This is S-adenosylmethionine synthase from Chromohalobacter salexigens (strain ATCC BAA-138 / DSM 3043 / CIP 106854 / NCIMB 13768 / 1H11).